The sequence spans 882 residues: Translation initiation factor IF-2 (882 aa).

Composition is skewed to polar residues over residues 38–56 (NDSN…AEYS), 97–124 (GGYS…YSQN), and 140–192 (GGYS…NRDS). 2 disordered regions span residues 38–192 (NDSN…NRDS) and 236–274 (STPA…AETE). Positions 243-259 (ENSKELNRKLGEKKKQQ) are enriched in basic and acidic residues. The region spanning 380–553 (EKPPVITIMG…DMMLLKANPS (174 aa)) is the tr-type G domain. Positions 389–396 (GHVDHGKT) are G1. 389–396 (GHVDHGKT) is a GTP binding site. The tract at residues 414-418 (GITQH) is G2. The segment at 435–438 (DTPG) is G3. Residues 435–439 (DTPGH) and 489–492 (NKID) each bind GTP. The tract at residues 489–492 (NKID) is G4. Positions 525–527 (SAL) are G5.

This sequence belongs to the TRAFAC class translation factor GTPase superfamily. Classic translation factor GTPase family. IF-2 subfamily.

It localises to the cytoplasm. Its function is as follows. One of the essential components for the initiation of protein synthesis. Protects formylmethionyl-tRNA from spontaneous hydrolysis and promotes its binding to the 30S ribosomal subunits. Also involved in the hydrolysis of GTP during the formation of the 70S ribosomal complex. This Borreliella burgdorferi (strain ATCC 35210 / DSM 4680 / CIP 102532 / B31) (Borrelia burgdorferi) protein is Translation initiation factor IF-2 (infB).